Reading from the N-terminus, the 875-residue chain is Alanine--tRNA ligase (875 aa).

Positions 596, 600, 700, and 704 each coordinate Zn(2+).

This sequence belongs to the class-II aminoacyl-tRNA synthetase family. Zn(2+) serves as cofactor.

It is found in the cytoplasm. The enzyme catalyses tRNA(Ala) + L-alanine + ATP = L-alanyl-tRNA(Ala) + AMP + diphosphate. Functionally, catalyzes the attachment of alanine to tRNA(Ala) in a two-step reaction: alanine is first activated by ATP to form Ala-AMP and then transferred to the acceptor end of tRNA(Ala). Also edits incorrectly charged Ser-tRNA(Ala) and Gly-tRNA(Ala) via its editing domain. In Methanocella arvoryzae (strain DSM 22066 / NBRC 105507 / MRE50), this protein is Alanine--tRNA ligase.